The following is a 144-amino-acid chain: Maximins 10/H3 (144 aa).

The N-terminal stretch at 1 to 18 (MNFKYIVAVSFLIASAYA) is a signal peptide. A propeptide spanning residues 19–43 (RSVKNDEQSLSQRDVLDEESLREFR) is cleaved from the precursor. At Ser-70 the chain carries Serine amide. A propeptide spanning residues 74–123 (TAEDHEVMKRLEAVMRDLDSLDYPEEATERETRGFNQEEIANLFTKKEKR) is cleaved from the precursor. Ile-143 is subject to Isoleucine amide.

Belongs to the bombinin family. In terms of tissue distribution, expressed by the skin glands.

The protein resides in the secreted. Its function is as follows. Maximin-10 shows antimicrobial activity against bacteria and against the fungus C.albicans. It has little hemolytic activity. Maximin-H3 shows antibacterial activity against both Gram-positive and Gram-negative bacteria. It also shows antimicrobial activity against the fungus C.albicans. Shows strong hemolytic activity. This Bombina maxima (Giant fire-bellied toad) protein is Maximins 10/H3.